The following is a 534-amino-acid chain: Serine/threonine-protein kinase 35 (534 aa).

Residues 32 to 176 (VESHGSLGAQ…AAAARAMDPV (145 aa)) are disordered. 2 stretches are compositionally biased toward low complexity: residues 39 to 65 (GAQA…TSRA) and 166 to 176 (PAAAARAMDPV). The Protein kinase domain maps to 202-530 (YSLLAEIGRG…FELETRMDQV (329 aa)). Residues 208–216 (IGRGSYGVV) and K231 each bind ATP. D360 functions as the Proton acceptor in the catalytic mechanism.

This sequence belongs to the protein kinase superfamily. Ser/Thr protein kinase family. In terms of assembly, interacts with PDLIM1/CLP-36. Post-translationally, autophosphorylated. Expressed in testis.

The protein localises to the nucleus. It is found in the nucleolus. The protein resides in the cytoplasm. The catalysed reaction is L-seryl-[protein] + ATP = O-phospho-L-seryl-[protein] + ADP + H(+). The enzyme catalyses L-threonyl-[protein] + ATP = O-phospho-L-threonyl-[protein] + ADP + H(+). This is Serine/threonine-protein kinase 35 (STK35) from Homo sapiens (Human).